Consider the following 658-residue polypeptide: Transcription factor E2-alpha (658 aa).

Disordered stretches follow at residues 42-82 (STQF…GTHY), 140-191 (SALS…YPAN), 276-313 (NPSV…GTAT), 331-372 (DHSS…SYDG), 460-558 (VPAQ…ERRV), and 628-658 (EEEK…VGHM). The Nuclear localization signal motif lies at 173–179 (PKKVRKV). Positions 276-303 (NPSVTSSFSSTPAQYGVSSHTPPISTGD) are enriched in polar residues. Positions 333 to 344 (SSTNFSSTPSTP) are enriched in low complexity. Residues 345 to 355 (VGSPQGITGSG) show a composition bias toward polar residues. Residues 493-507 (PDIKRESKEDEENRS) show a composition bias toward basic and acidic residues. Acidic residues predominate over residues 533–544 (QDEDEDEDDDNL). A compositionally biased stretch (basic and acidic residues) spans 548 to 558 (QKAEREKERRV). A bHLH domain is found at 555 to 608 (ERRVANNARERLRVKDINEAFKELGRMCQLHLNSEKPQTKLLILHQAVSVILSL).

As to quaternary structure, homodimer. Heterodimer; efficient DNA binding requires dimerization with another bHLH protein. Interacts with tgfb1i1.

The protein resides in the nucleus. Functionally, transcriptional regulator involved in the initiation of neuronal differentiation and mesenchymal to epithelial transition. Heterodimers between tcf3 and tissue-specific basic helix-loop-helix (bHLH) proteins play major roles in determining tissue-specific cell fate during embryogenesis, like muscle or early B-cell differentiation. Together with tcf15, required for the mesenchymal to epithelial transition. Dimers bind DNA on E-box motifs: 5'-CANNTG-3'. In Xenopus laevis (African clawed frog), this protein is Transcription factor E2-alpha (tcf3).